Consider the following 584-residue polypeptide: Lamin-B1 (584 aa).

The segment at 1 to 22 is disordered; that stretch reads MAAAVAPLSPQPRGAAASAALS. A head region spans residues 2–33; the sequence is AAAVAPLSPQPRGAAASAALSPTRISRLQEKE. Residue Ser22 is modified to Phosphoserine. Residues 31-387 form the IF rod domain; that stretch reads EKEELRQLND…KLLESEEERL (357 aa). The coil 1A stretch occupies residues 34 to 70; the sequence is ELRQLNDRLAVYIDKVRSLETENSALQRRVSEREQVC. The tract at residues 81–218 is coil 1B; it reads FETELADARK…NVYEEEIKET (138 aa). Residues 243–385 form a coil 2 region; it reads QALKEIREQH…YRKLLESEEE (143 aa). A tail region spans residues 386 to 584; the sequence is RLRLSPGPSS…RKPERSCVVM (199 aa). Disordered regions lie at residues 388–431 and 548–584; these read RLSP…SVSI and TVNE…CVVM. Over residues 394–408 the composition is skewed to low complexity; that stretch reads SSRVTVSRASSSRSV. The Nuclear localization signal signature appears at 414 to 419; the sequence is KRKRID. An LTD domain is found at 429 to 545; the sequence is VSISHSASAT…EEVAQRSTVF (117 aa). Residues 551–565 show a composition bias toward acidic residues; sequence EGEEEEEEGEEEILE. A compositionally biased stretch (basic and acidic residues) spans 575–584; sequence RKPERSCVVM. The residue at position 581 (Cys581) is a Cysteine methyl ester. Cys581 is lipidated: S-farnesyl cysteine. The propeptide at 582–584 is removed in mature form; that stretch reads VVM.

This sequence belongs to the intermediate filament family. In terms of assembly, homodimer. Lamin dimers then assemble into dimeric head-to-tail polymers. Ultimately, two head-to-tail polymers assemble laterally into a protofilament with a uniformly shaped rod of 3.5 nm in diameter. In terms of processing, phosphorylation plays a key role in lamin organization, subcellular localization and nuclear envelope disintegration. Phosphorylation by CDK1 at Ser-22 at the onset of mitosis drives lamin disassembly and nuclear envelope breakdown.

It localises to the nucleus lamina. Its subcellular location is the nucleus envelope. The protein localises to the nucleus. It is found in the nucleoplasm. The protein resides in the nucleus matrix. Functionally, lamins are intermediate filament proteins that assemble into a filamentous meshwork, and which constitute the major components of the nuclear lamina, a fibrous layer on the nucleoplasmic side of the inner nuclear membrane. Lamins provide a framework for the nuclear envelope, bridging the nuclear envelope and chromatin. Plays an important role in nuclear assembly, chromatin organization, nuclear membrane and telomere dynamics. The protein is Lamin-B1 (LMNB1) of Gallus gallus (Chicken).